The sequence spans 61 residues: Short neurotoxin 1 (61 aa).

Disulfide bonds link Cys-3-Cys-23, Cys-17-Cys-40, Cys-42-Cys-53, and Cys-54-Cys-59.

It belongs to the three-finger toxin family. Short-chain subfamily. Type I alpha-neurotoxin sub-subfamily. As to expression, expressed by the venom gland.

It localises to the secreted. In terms of biological role, binds to muscle nicotinic acetylcholine receptor (nAChR) and inhibit acetylcholine from binding to the receptor, thereby impairing neuromuscular transmission. This Naja samarensis (Peters' cobra) protein is Short neurotoxin 1.